Consider the following 229-residue polypeptide: (S)-2-haloacid dehalogenase 2 (229 aa).

The Nucleophile role is filled by aspartate 10. Residues 11 to 12, arginine 41, and 118 to 119 contribute to the an (S)-2-haloacid site; these read LY and SN. The tract at residues 175–180 is important for catalytic activity; that stretch reads SSNAWD.

Belongs to the HAD-like hydrolase superfamily. S-2-haloalkanoic acid dehalogenase family.

The enzyme catalyses an (S)-2-haloacid + H2O = a (2R)-2-hydroxycarboxylate + a halide anion + H(+). It catalyses the reaction (S)-2-chloropropanoate + H2O = (R)-lactate + chloride + H(+). Functionally, catalyzes the hydrolytic dehalogenation of small (S)-2-haloalkanoic acids to yield the corresponding (R)-2-hydroxyalkanoic acids. Acts on acids of short chain lengths, C(2) to C(4), with inversion of configuration at C-2. Active with 2-halogenated carboxylic acids and converts only the S-isomer (or L-isomer) of 2-chloropropionic acid with inversion of configuration to produce R-lactate (or D-isomer). This Pseudomonas sp. (strain CBS-3) protein is (S)-2-haloacid dehalogenase 2.